We begin with the raw amino-acid sequence, 252 residues long: Glycerol-3-phosphate acyltransferase (252 aa).

The next 6 membrane-spanning stretches (helical) occupy residues Ser-6–Gly-26, Ile-66–Ile-86, Ala-104–Phe-124, Ile-140–Ile-160, Met-164–Ile-184, and Val-204–Tyr-224.

This sequence belongs to the PlsY family. In terms of assembly, probably interacts with PlsX.

It localises to the cell membrane. It carries out the reaction an acyl phosphate + sn-glycerol 3-phosphate = a 1-acyl-sn-glycero-3-phosphate + phosphate. Its pathway is lipid metabolism; phospholipid metabolism. Its function is as follows. Catalyzes the transfer of an acyl group from acyl-phosphate (acyl-PO(4)) to glycerol-3-phosphate (G3P) to form lysophosphatidic acid (LPA). This enzyme utilizes acyl-phosphate as fatty acyl donor, but not acyl-CoA or acyl-ACP. The protein is Glycerol-3-phosphate acyltransferase of Ureaplasma urealyticum serovar 10 (strain ATCC 33699 / Western).